Here is a 443-residue protein sequence, read N- to C-terminus: Thymidine phosphorylase (443 aa).

It belongs to the thymidine/pyrimidine-nucleoside phosphorylase family. In terms of assembly, homodimer.

The enzyme catalyses thymidine + phosphate = 2-deoxy-alpha-D-ribose 1-phosphate + thymine. It functions in the pathway pyrimidine metabolism; dTMP biosynthesis via salvage pathway; dTMP from thymine: step 1/2. In terms of biological role, the enzymes which catalyze the reversible phosphorolysis of pyrimidine nucleosides are involved in the degradation of these compounds and in their utilization as carbon and energy sources, or in the rescue of pyrimidine bases for nucleotide synthesis. The polypeptide is Thymidine phosphorylase (Photobacterium profundum (strain SS9)).